The primary structure comprises 835 residues: Serine/threonine-protein kinase TNNI3K (835 aa).

A lipid anchor (N-myristoyl glycine) is attached at G2. Positions 21–50 (SESYAIIIERLEDNLQIKENEFQELRHIFG) form a coiled coil. ANK repeat units follow at residues 66 to 96 (RGLS…RPSR), 100 to 129 (NGFP…DVQQ), 133 to 162 (GGLT…NVNV), 166 to 195 (VFFT…DVNV), 199 to 228 (VGDR…KADV), 234 to 263 (EDHV…EVQP), 269 to 298 (YGDT…TESL), 304 to 335 (FSET…NINH), 339 to 368 (DGHT…DMNL), and 381 to 410 (DEQT…PQEE). One can recognise a Protein kinase domain in the interval 463-723 (IEFHEIIGSG…EVVSKLEECL (261 aa)). ATP-binding positions include 469–477 (IGSGSFGKV) and K490. D588 functions as the Proton acceptor in the catalytic mechanism.

It belongs to the protein kinase superfamily. TKL Ser/Thr protein kinase family. MAP kinase kinase kinase subfamily. As to quaternary structure, interacts with TNNI3, ACTC, ACTA1, MYBPC3, AIP, FABP3 and HADHB. Mg(2+) serves as cofactor. Autophosphorylated.

It localises to the nucleus. The protein resides in the cytoplasm. The catalysed reaction is L-seryl-[protein] + ATP = O-phospho-L-seryl-[protein] + ADP + H(+). The enzyme catalyses L-threonyl-[protein] + ATP = O-phospho-L-threonyl-[protein] + ADP + H(+). Its function is as follows. May play a role in cardiac physiology. The chain is Serine/threonine-protein kinase TNNI3K from Rattus norvegicus (Rat).